Reading from the N-terminus, the 440-residue chain is MENLATLYPAHIIELNRRVAEITAREQLAGLVIHSGQPHRQFLDDLDYPFKVNPHFKAWLPVIDNPHCWLIVNGRDKPQLIFYRPVDFWHKVADLPEDFWTTEIEIKVLTKADKVADLLPGKLQEWAYIGEHLDVADVLGFGSRNPEAVMSYLHYHRASKTAYELACMRRASEIGVRGHVAAKSAFYAGASEFEIQQAYLAATDMGENDVPYGNIIALNQNAAILHYTALEHVSPKQRLSFLIDAGGSFHGYASDITRTYAFEKNLFGDLIAAMDKLQLAIIEMMRPGVKYVDLHLATHQKLAQLLLDFKLVQGDPQGLIEQGITSAFFPHGLGHMLGLQVHDMGGFLHDERGTHIAPPEAHPFLRCTRTLAANQVLTIEPGLYIIDSLLNELKQDGRADWINWQMVDQVRPFGGIRIEDNVIVHSDHNENMTRDLGLHG.

Positions 244, 255, 335, 380, and 419 each coordinate Mn(2+).

The protein belongs to the peptidase M24B family. Bacterial-type prolidase subfamily. Mn(2+) is required as a cofactor.

The catalysed reaction is Xaa-L-Pro dipeptide + H2O = an L-alpha-amino acid + L-proline. Splits dipeptides with a prolyl residue in the C-terminal position. This is Xaa-Pro dipeptidase from Shewanella loihica (strain ATCC BAA-1088 / PV-4).